Consider the following 70-residue polypeptide: Small ribosomal subunit protein bS21B (70 aa).

This sequence belongs to the bacterial ribosomal protein bS21 family.

This is Small ribosomal subunit protein bS21B from Cupriavidus metallidurans (strain ATCC 43123 / DSM 2839 / NBRC 102507 / CH34) (Ralstonia metallidurans).